Here is a 543-residue protein sequence, read N- to C-terminus: uncharacterized protein (543 aa).

The TRAM domain occupies 1–59 (MLKKNDIVEVEIVDLTHEGAGVAKVDGLVFFVENALPSEKILMRVLKVNKKIGFGKVEK). S-adenosyl-L-methionine is bound by residues Gln283, Tyr312, Glu333, and Asp381. Cys408 serves as the catalytic Nucleophile.

It belongs to the class I-like SAM-binding methyltransferase superfamily. RNA M5U methyltransferase family.

This is an uncharacterized protein from Streptococcus pneumoniae serotype 4 (strain ATCC BAA-334 / TIGR4).